A 405-amino-acid polypeptide reads, in one-letter code: Elongation factor Tu (405 aa).

Residues 10–215 (KPHVNIGTIG…AVDSYIPTPE (206 aa)) enclose the tr-type G domain. The tract at residues 19–26 (GHVDHGKT) is G1. Position 19-26 (19-26 (GHVDHGKT)) interacts with GTP. Threonine 26 provides a ligand contact to Mg(2+). A G2 region spans residues 61–65 (GITIN). Positions 82–85 (DCPG) are G3. GTP-binding positions include 82–86 (DCPGH) and 137–140 (NKVD). The interval 137–140 (NKVD) is G4. Residues 175–177 (SAL) are G5.

It belongs to the TRAFAC class translation factor GTPase superfamily. Classic translation factor GTPase family. EF-Tu/EF-1A subfamily. In terms of assembly, monomer.

The protein resides in the cytoplasm. It catalyses the reaction GTP + H2O = GDP + phosphate + H(+). Functionally, GTP hydrolase that promotes the GTP-dependent binding of aminoacyl-tRNA to the A-site of ribosomes during protein biosynthesis. This is Elongation factor Tu from Deinococcus radiodurans (strain ATCC 13939 / DSM 20539 / JCM 16871 / CCUG 27074 / LMG 4051 / NBRC 15346 / NCIMB 9279 / VKM B-1422 / R1).